The following is a 504-amino-acid chain: Peroxisome proliferator-activated receptor gamma (504 aa).

Ser-111 is subject to Phosphoserine; by MAPK. A DNA-binding region (nuclear receptor) is located at residues 135-209 (AIECRVCGDK…VGMSHNAIRF (75 aa)). 2 consecutive NR C4-type zinc fingers follow at residues 138–158 (CRVCGDKASGFHYGVHACEGC) and 175–197 (CDLNCRIHKKSRNKCQYCRFQKC). An interaction with FAM120B region spans residues 204-279 (HNAIRFGRMP…DKSPFVIYDM (76 aa)). An NR LBD domain is found at 237 to 502 (DLRALAKHLY…HPLLQEIYKD (266 aa)). Lys-251 is covalently cross-linked (Glycyl lysine isopeptide (Lys-Gly) (interchain with G-Cter in ubiquitin)). Positions 494 to 502 (PLLQEIYKD) match the 9aaTAD motif.

It belongs to the nuclear hormone receptor family. NR1 subfamily. As to quaternary structure, interacts with FOXO1 (acetylated form). Heterodimer with other nuclear receptors, such as RXRA. The heterodimer with the retinoic acid receptor RXRA is called adipocyte-specific transcription factor ARF6. Interacts with NCOA6 coactivator, leading to a strong increase in transcription of target genes. Interacts with coactivator PPARBP, leading to a mild increase in transcription of target genes. Interacts with NOCA7 in a ligand-inducible manner. Interacts with NCOA1 and NCOA2 LXXLL motifs. Interacts with ASXL1, ASXL2, DNTTIP2, FAM120B, MAP2K1/MEK1, NR0B2, PDPK1, PRDM16, PRMT2 and TGFB1I1. Interacts (when activated by agonist) with PPP5C. Interacts with HELZ2 and THRAP3; the interaction stimulates the transcriptional activity of PPARG. Interacts with PER2, the interaction is ligand dependent and blocks PPARG recruitment to target promoters. Interacts with NOCT. Interacts with ACTN4. Interacts (when in the liganded conformation) with GPS2. Interacts with CRY1 and CRY2 in a ligand-dependent manner. In the absence of hormonal ligand, interacts with TACC1. In macrophages, interacts with PAQR3 and STUB1; the interactions promote PPARG poylubiquitination and STUB1-mediated degradation. Post-translationally, phosphorylated at basal conditions and dephosphorylated when treated with the ligand. May be dephosphorylated by PPP5C. The phosphorylated form may be inactive and dephosphorylation induces adipogenic activity. In terms of processing, ubiquitinated by E3 ubiquitin-protein ligase complex containing FBXO9; leading to proteasomal degradation. Ubiquitinated at Lys-251 by TRIM55 leading to proteasomal degradation. Ubiquitinated by E3 ubiquitin-protein ligase STUB1/CHIP; leading to proteasomal degradation. In terms of tissue distribution, highest expression in adipose tissue and lower in spleen. Very low levels in kidney, intestine, lung and muscle.

It localises to the nucleus. Its subcellular location is the cytoplasm. With respect to regulation, PDPK1 activates its transcriptional activity independently of its kinase activity. In terms of biological role, nuclear receptor that binds peroxisome proliferators such as hypolipidemic drugs and fatty acids. Once activated by a ligand, the nuclear receptor binds to DNA specific PPAR response elements (PPRE) and modulates the transcription of its target genes, such as acyl-CoA oxidase. It therefore controls the peroxisomal beta-oxidation pathway of fatty acids. Key regulator of adipocyte differentiation and glucose homeostasis. ARF6 acts as a key regulator of the tissue-specific adipocyte P2 (aP2) enhancer. Acts as a critical regulator of gut homeostasis by suppressing NF-kappa-B-mediated pro-inflammatory responses. Plays a role in the regulation of cardiovascular circadian rhythms by regulating the transcription of BMAL1 in the blood vessels. This Sus scrofa (Pig) protein is Peroxisome proliferator-activated receptor gamma (PPARG).